We begin with the raw amino-acid sequence, 397 residues long: Beta-lactamase (397 aa).

The first 26 residues, 1–26 (MRDTRFPCLCGIAASTLLFATTPAIA), serve as a signal peptide directing secretion. The active-site Acyl-ester intermediate is the Ser90. Residues Ser90, Gln146, Tyr177, Asn179, and Asn370 each coordinate a beta-lactam. Tyr177 serves as the catalytic Proton acceptor.

This sequence belongs to the class-C beta-lactamase family. In terms of assembly, monomer.

The protein resides in the periplasm. It catalyses the reaction a beta-lactam + H2O = a substituted beta-amino acid. Functionally, class C beta-lactamase which confers resistance to penicillins and cephalosporins. Has nitrocefin-hydrolyzing activity. This Pseudomonas aeruginosa (strain ATCC 15692 / DSM 22644 / CIP 104116 / JCM 14847 / LMG 12228 / 1C / PRS 101 / PAO1) protein is Beta-lactamase (ampC).